The following is a 393-amino-acid chain: MLRRLLERPCTLALLVGSQLAVMMYLSLGGFRSLSALFGRDQGPTFDYSHPRDVYSNLSHLPGAPGGPPAPQGLPYCPERSPLLVGPVSVSFSPVPSLAEIVERNPRVEPGGRYRPAGCEPRSRTAIIVPHRAREHHLRLLLYHLHPFLQRQQLAYGIYVIHQAGNGTFNRAKLLNVGVREALRDEEWDCLFLHDVDLLPENDHNLYVCDPRGPRHVAVAMNKFGYSLPYPQYFGGVSALTPDQYLKMNGFPNEYWGWGGEDDDIATRVRLAGMKISRPPTSVGHYKMVKHRGDKGNEENPHRFDLLVRTQNSWTQDGMNSLTYQLLARELGPLYTNITADIGTDPRGPRAPSGPRYPPGSSQAFRQEMLQRRPPARPGPLSTANHTALRGSH.

At 1 to 10 (MLRRLLERPC) the chain is on the cytoplasmic side. The chain crosses the membrane as a helical; Signal-anchor for type II membrane protein span at residues 11-31 (TLALLVGSQLAVMMYLSLGGF). Topologically, residues 32–393 (RSLSALFGRD…ANHTALRGSH (362 aa)) are lumenal. N-linked (GlcNAc...) asparagine glycosylation occurs at Asn57. Cys77 and Cys119 are disulfide-bonded. UDP-alpha-D-galactose is bound at residue 130 to 134 (PHRAR). The N-linked (GlcNAc...) asparagine glycan is linked to Asn166. UDP-alpha-D-galactose contacts are provided by residues 169-171 (FNR), 196-197 (VD), Tyr226, and Trp258. Cys190 and Cys209 form a disulfide bridge. Residue Asp197 participates in Mn(2+) binding. 260-263 (GEDD) lines the N-acetyl-D-glucosamine pocket. Mn(2+) is bound at residue His291. 291–293 (HRG) is a UDP-alpha-D-galactose binding site. Arg303 contacts N-acetyl-D-glucosamine. Residues Asn337 and Asn385 are each glycosylated (N-linked (GlcNAc...) asparagine). The interval 339-393 (TADIGTDPRGPRAPSGPRYPPGSSQAFRQEMLQRRPPARPGPLSTANHTALRGSH) is disordered.

The protein belongs to the glycosyltransferase 7 family. Requires Mn(2+) as cofactor. In terms of tissue distribution, found in various tissues. Highest expression in placenta, prostate, testis, ovary, intestine and muscle, and in fetal brain.

It localises to the golgi apparatus. The protein localises to the golgi stack membrane. It carries out the reaction an N-acetyl-beta-D-glucosaminyl derivative + UDP-alpha-D-galactose = a beta-D-galactosyl-(1-&gt;4)-N-acetyl-beta-D-glucosaminyl derivative + UDP + H(+). The catalysed reaction is N-acetyl-D-glucosamine + UDP-alpha-D-galactose = beta-D-galactosyl-(1-&gt;4)-N-acetyl-D-glucosamine + UDP + H(+). It catalyses the reaction a beta-D-GlcNAc-(1-&gt;3)-beta-D-Gal-(1-&gt;4)-beta-D-Glc-(1&lt;-&gt;1)-Cer(d18:1(4E)) + UDP-alpha-D-galactose = a neolactoside nLc4Cer(d18:1(4E)) + UDP + H(+). The enzyme catalyses a beta-D-glucosylceramide + UDP-alpha-D-galactose = a beta-D-galactosyl-(1-&gt;4)-beta-D-glucosyl-(1&lt;-&gt;1)-ceramide + UDP + H(+). It carries out the reaction a neolactoside IV(3)-beta-GlcNAc-nLc4Cer + UDP-alpha-D-galactose = a neolactoside nLc6Cer + UDP + H(+). The protein operates within protein modification; protein glycosylation. Responsible for the synthesis of complex-type N-linked oligosaccharides in many glycoproteins as well as the carbohydrate moieties of glycolipids. This is Beta-1,4-galactosyltransferase 3 from Homo sapiens (Human).